The primary structure comprises 303 residues: Glutathione transport system permease protein GsiD (303 aa).

The next 6 membrane-spanning stretches (helical) occupy residues 40-60, 105-125, 144-164, 165-185, 222-242, and 266-286; these read AMTA…ARWI, LAAG…LGLL, LFAF…GSGI, ANVI…LVRG, IVVF…SLSF, and VIAP…VLAF. Positions 101–290 constitute an ABC transmembrane type-1 domain; it reads AQISLAAGVF…LTVLAFNLLG (190 aa).

Belongs to the binding-protein-dependent transport system permease family. The complex is composed of two ATP-binding proteins (GsiA), two transmembrane proteins (GsiC and GsiD) and a solute-binding protein (GsiB).

It is found in the cell inner membrane. Functionally, part of the ABC transporter complex GsiABCD involved in glutathione import. Probably responsible for the translocation of the substrate across the membrane. The sequence is that of Glutathione transport system permease protein GsiD from Escherichia coli O157:H7.